The primary structure comprises 100 residues: Cell division protein FtsB (100 aa).

Residues 1–3 (MKQ) are Cytoplasmic-facing. Residues 4–21 (LIFLLICLLSLLQYRLWL) traverse the membrane as a helical segment. Over 22 to 100 (GDNNLSEYVL…ELRERNPFNR (79 aa)) the chain is Periplasmic. The stretch at 49–73 (RNQILKEEIIDLKRGTEAIEERARN) forms a coiled coil.

Belongs to the FtsB family. Part of a complex composed of FtsB, FtsL and FtsQ.

It is found in the cell inner membrane. In terms of biological role, essential cell division protein. May link together the upstream cell division proteins, which are predominantly cytoplasmic, with the downstream cell division proteins, which are predominantly periplasmic. In Shewanella frigidimarina (strain NCIMB 400), this protein is Cell division protein FtsB.